A 184-amino-acid chain; its full sequence is Ribosome-recycling factor (184 aa).

This sequence belongs to the RRF family.

The protein localises to the cytoplasm. Functionally, responsible for the release of ribosomes from messenger RNA at the termination of protein biosynthesis. May increase the efficiency of translation by recycling ribosomes from one round of translation to another. This is Ribosome-recycling factor from Stenotrophomonas maltophilia (strain R551-3).